The chain runs to 155 residues: Nascent polypeptide-associated complex subunit beta (155 aa).

2 disordered regions span residues 1-39 (MDQA…DDKK) and 122-155 (QNMQ…SKVE). Residues 21 to 31 (TPRRKTKKVHK) show a composition bias toward basic residues. The region spanning 34–99 (GTDDKKLQTS…GEEKELTELV (66 aa)) is the NAC-A/B domain. Residues 125-135 (QKKEGEAKKEG) show a composition bias toward basic and acidic residues.

This sequence belongs to the NAC-beta family. In terms of assembly, part of the nascent polypeptide-associated complex (NAC), consisting of EGD2 and EGD1. NAC associates with ribosomes via EGD1.

The protein resides in the cytoplasm. The protein localises to the nucleus. Component of the nascent polypeptide-associated complex (NAC), a dynamic component of the ribosomal exit tunnel, protecting the emerging polypeptides from interaction with other cytoplasmic proteins to ensure appropriate nascent protein targeting. The NAC complex also promotes mitochondrial protein import by enhancing productive ribosome interactions with the outer mitochondrial membrane and blocks the inappropriate interaction of ribosomes translating non-secretory nascent polypeptides with translocation sites in the membrane of the endoplasmic reticulum. EGD1 may act as a transcription factor that exert a negative effect on the expression of several genes that are transcribed by RNA polymerase II. The chain is Nascent polypeptide-associated complex subunit beta (EGD1) from Coccidioides immitis (strain RS) (Valley fever fungus).